Reading from the N-terminus, the 359-residue chain is 3-dehydroquinate synthase (359 aa).

NAD(+) is bound by residues Asp71 to Lys76, Gly105 to Asp109, Thr129 to Thr130, Lys142, Lys151, and Cys169 to Thr172. 3 residues coordinate Zn(2+): Glu184, His247, and His264.

The protein belongs to the sugar phosphate cyclases superfamily. Dehydroquinate synthase family. It depends on Co(2+) as a cofactor. The cofactor is Zn(2+). NAD(+) is required as a cofactor.

It is found in the cytoplasm. The catalysed reaction is 7-phospho-2-dehydro-3-deoxy-D-arabino-heptonate = 3-dehydroquinate + phosphate. The protein operates within metabolic intermediate biosynthesis; chorismate biosynthesis; chorismate from D-erythrose 4-phosphate and phosphoenolpyruvate: step 2/7. Its function is as follows. Catalyzes the conversion of 3-deoxy-D-arabino-heptulosonate 7-phosphate (DAHP) to dehydroquinate (DHQ). In Shewanella sp. (strain W3-18-1), this protein is 3-dehydroquinate synthase.